We begin with the raw amino-acid sequence, 156 residues long: SCP2 sterol-binding domain-containing protein 1 (156 aa).

The 113-residue stretch at 44–156 (TVPVFEDISQ…ERVFKDWAKW (113 aa)) folds into the SCP2 domain.

This is SCP2 sterol-binding domain-containing protein 1 (SCP2D1) from Bos taurus (Bovine).